The chain runs to 900 residues: Suppressor of activated egl-4 protein 1 (900 aa).

Disordered regions lie at residues 1 to 75 (MPPP…HLPT), 340 to 380 (PVAE…SRKN), and 406 to 425 (WASTSSADEKMQTERKESLE). Polar residues predominate over residues 53-75 (ASGQQHRPSIMSGQSHQNNHLPT). Basic and acidic residues-rich tracts occupy residues 358 to 377 (GDMKHLMNGKKRSEDGDGPS) and 412 to 425 (ADEKMQTERKESLE). The ELM2 domain maps to 451–544 (PHINLGKNYQ…AAVEDLLRSD (94 aa)). One can recognise an SANT domain in the interval 560-611 (NDSVLWTPDEIYQFQDAIYQSEKDFDKVAVELPGKSVKECVQFYYTWKKDCP). The tract at residues 710–729 (PTAPRAHHTPSASASKKGAQ) is disordered. The C2H2-type zinc finger occupies 736-758 (FHCRLCDKCFEKVKSLNAHMKSH).

As to quaternary structure, may be a component of a histone deacetylase complex containing saeg-2, saeg-1 and hda-2. May interact with egl-4. In terms of tissue distribution, ubiquitously expressed.

It localises to the nucleus. In terms of biological role, as a likely component of a histone deacetylase complex, together with saeg-2 and hda-2, functions downstream of the cAMP-dependent kinase egl-4 to regulate the expression of genes required for egg-laying and foraging. This is Suppressor of activated egl-4 protein 1 from Caenorhabditis elegans.